The following is a 47-amino-acid chain: Large ribosomal subunit protein bL33 (47 aa).

It belongs to the bacterial ribosomal protein bL33 family.

This is Large ribosomal subunit protein bL33 from Staphylococcus xylosus.